Reading from the N-terminus, the 72-residue chain is Translation initiation factor IF-1 (72 aa).

The S1-like domain maps to 1-72; sequence MAKEDNIEMQ…SKGRIVFRSR (72 aa).

It belongs to the IF-1 family. As to quaternary structure, component of the 30S ribosomal translation pre-initiation complex which assembles on the 30S ribosome in the order IF-2 and IF-3, IF-1 and N-formylmethionyl-tRNA(fMet); mRNA recruitment can occur at any time during PIC assembly.

The protein localises to the cytoplasm. Functionally, one of the essential components for the initiation of protein synthesis. Stabilizes the binding of IF-2 and IF-3 on the 30S subunit to which N-formylmethionyl-tRNA(fMet) subsequently binds. Helps modulate mRNA selection, yielding the 30S pre-initiation complex (PIC). Upon addition of the 50S ribosomal subunit IF-1, IF-2 and IF-3 are released leaving the mature 70S translation initiation complex. The polypeptide is Translation initiation factor IF-1 (Salmonella paratyphi A (strain ATCC 9150 / SARB42)).